A 562-amino-acid chain; its full sequence is Thermosome subunit alpha (562 aa).

Disordered regions lie at residues 1–23 (MAQQ…TSGE) and 526–551 (GGQV…GMGG). Over residues 537 to 551 (GPAGGPGGMGGGMGG) the composition is skewed to gly residues.

This sequence belongs to the TCP-1 chaperonin family. In terms of assembly, forms an oligomeric complex of eight-membered rings.

Functionally, molecular chaperone; binds unfolded polypeptides in vitro, and has a weak ATPase activity. This chain is Thermosome subunit alpha (thsA), found in Halobacterium salinarum (strain ATCC 700922 / JCM 11081 / NRC-1) (Halobacterium halobium).